Consider the following 427-residue polypeptide: ETS domain-containing protein Elk-1 (427 aa).

A DNA-binding region (ETS) is located at residues 5-86 (VTLWQFLLQL…SGQKFVYKFV (82 aa)). Disordered regions lie at residues 116 to 146 (ATVH…GLAR), 166 to 202 (LQPQ…SPNP), and 226 to 252 (PNQK…VEGP). Residues K229, K248, and K253 each participate in a glycyl lysine isopeptide (Lys-Gly) (interchain with G-Cter in SUMO) cross-link. Residues 300–310 (STSTTEITQPQ) show a composition bias toward polar residues. The disordered stretch occupies residues 300-350 (STSTTEITQPQKGRKPRDLELPLSPSLLGGQGPERTPGSGTSSGLQAQGPA). S323 carries the post-translational modification Phosphoserine; by MAPK1. Residues T335, T352, T362, and T367 each carry the phosphothreonine; by MAPK1 modification. Residues 348-398 (GPALTPSLLPTHTLTPVLLTPSSLPPSIHFWSTLSPIAPRSPAKLSFQFPS) form a sufficient for interaction with MAD2L2 region. O-linked (GlcNAc) threonine glycosylation is present at T380. At S382 the chain carries Phosphoserine; by MAPK1 and MAPK8. At S388 the chain carries Phosphoserine; by MAPK1. Phosphothreonine; by MAPK1 is present on T416. Position 421 is a phosphoserine; by MAPK1 (S421).

The protein belongs to the ETS family. As to quaternary structure, interacts in its sumoylated form with PIAS2/PIASX which enhances its transcriptional activator activity. Interacts with MAD2L2; the interaction is direct and promotes phosphorylation by the kinases MAPK8 and/or MAPK9. Interacts with POU1F1. Sumoylation represses transcriptional activator activity as it results in recruitment of HDAC2 to target gene promoters which leads to decreased histone acetylation and reduced transactivator activity. It also regulates nuclear retention. Post-translationally, on mitogenic stimulation, phosphorylated on C-terminal serine and threonine residues by MAPK1. Ser-382 and Ser-388 are the preferred sites for MAPK1. In vitro, phosphorylation by MAPK1 potentiates ternary complex formation with the serum responses factors, SRE and SRF. Also phosphorylated on Ser-382 by MAPK8 and/or MAKP9. Phosphorylation leads to loss of sumoylation and restores transcriptional activator activity. Phosphorylated and activated by CAMK4, MAPK11, MAPK12 and MAPK14. Upon bFGF stimulus, phosphorylated by PAK1. Phosphorylated by PRP4K at Thr-416; phosphorylation activation ELK1 transcriptional activity.

It localises to the nucleus. Its function is as follows. Transcription factor that binds to purine-rich DNA sequences. Forms a ternary complex with SRF and the ETS and SRF motifs of the serum response element (SRE) on the promoter region of immediate early genes such as FOS and IER2. Induces target gene transcription upon JNK and MAPK-signaling pathways stimulation. This is ETS domain-containing protein Elk-1 from Rattus norvegicus (Rat).